The primary structure comprises 326 residues: Meso-diaminopimelate D-dehydrogenase (326 aa).

Residues 11 to 14 (YGNL), 35 to 37 (TRR), 69 to 72 (CGGS), 92 to 94 (SFD), and 121 to 125 (VGWDP) each bind NADP(+). Residues Asp94, Asp124, Trp148, 154–155 (QG), Thr173, Arg199, His249, and Asn276 contribute to the substrate site.

This sequence belongs to the diaminopimelate dehydrogenase family. Homodimer.

It catalyses the reaction meso-2,6-diaminopimelate + NADP(+) + H2O = (S)-2-amino-6-oxoheptanedioate + NH4(+) + NADPH + H(+). It functions in the pathway amino-acid biosynthesis; L-lysine biosynthesis via DAP pathway; DL-2,6-diaminopimelate from (S)-tetrahydrodipicolinate: step 1/1. Its activity is regulated as follows. The enzyme is completely inhibited by p-chloromercuribenzoate and HgCl(2) in vitro. Thioglycollate, L-cysteine and Cu(2+) also strongly inhibit the enzyme. In terms of biological role, catalyzes the reversible NADPH-dependent reductive amination of L-2-amino-6-oxopimelate, the acyclic form of L-tetrahydrodipicolinate, to generate the meso compound, D,L-2,6-diaminopimelate. Probably plays a role in lysine biosynthesis. Is highly specific for meso-2,6-diaminopimelate as the electron donor, since the following amino acids are inert for the oxidative deamination reaction: DL-2-aminopimelate, D-glutamate, L-glutamate, D-aspartate, L-aspartate, D-alanine, L-alanine, D-valine, L-valine, D-lysine, L-lysine, D-phenylalanine, L-phenylalanine, D-leucine, L-leucine, D-threonine, L-threonine, D-serine, L-serine, D-tryptophan, L-tryptophan, D-cysteine, L-cysteine, D-histidine, L-histidine, D-methionine, D-arginine, D-proline, D-asparagine, D-glutamine, D-isoleucine and D-ornithine. Moreover, exclusively uses NADP as the electron acceptor for the oxidative deamination of meso-DAP; NAD is inert. This is Meso-diaminopimelate D-dehydrogenase (ddh) from Ureibacillus thermosphaericus.